A 469-amino-acid polypeptide reads, in one-letter code: Ribulose bisphosphate carboxylase large chain (469 aa).

The residue at position 5 (Lys5) is an N6,N6,N6-trimethyllysine. Substrate contacts are provided by Asn114 and Thr164. Lys166 functions as the Proton acceptor in the catalytic mechanism. Residue Lys168 coordinates substrate. The Mg(2+) site is built by Lys192, Asp194, and Glu195. At Lys192 the chain carries N6-carboxylysine. The active-site Proton acceptor is His285. Residues Arg286, His318, and Ser370 each coordinate substrate.

This sequence belongs to the RuBisCO large chain family. Type I subfamily. In terms of assembly, heterohexadecamer of 8 large chains and 8 small chains; disulfide-linked. The disulfide link is formed within the large subunit homodimers. It depends on Mg(2+) as a cofactor. Post-translationally, the disulfide bond which can form in the large chain dimeric partners within the hexadecamer appears to be associated with oxidative stress and protein turnover.

Its subcellular location is the plastid. The protein resides in the chloroplast. It catalyses the reaction 2 (2R)-3-phosphoglycerate + 2 H(+) = D-ribulose 1,5-bisphosphate + CO2 + H2O. The catalysed reaction is D-ribulose 1,5-bisphosphate + O2 = 2-phosphoglycolate + (2R)-3-phosphoglycerate + 2 H(+). Its function is as follows. RuBisCO catalyzes two reactions: the carboxylation of D-ribulose 1,5-bisphosphate, the primary event in carbon dioxide fixation, as well as the oxidative fragmentation of the pentose substrate in the photorespiration process. Both reactions occur simultaneously and in competition at the same active site. The sequence is that of Ribulose bisphosphate carboxylase large chain from Cephalanthus occidentalis (Common buttonbush).